We begin with the raw amino-acid sequence, 432 residues long: Enolase (432 aa).

Q167 is a (2R)-2-phosphoglycerate binding site. The Proton donor role is filled by E209. Mg(2+)-binding residues include D246, E290, and D317. 4 residues coordinate (2R)-2-phosphoglycerate: K342, R371, S372, and K393. The Proton acceptor role is filled by K342.

It belongs to the enolase family. As to quaternary structure, component of the RNA degradosome, a multiprotein complex involved in RNA processing and mRNA degradation. It depends on Mg(2+) as a cofactor.

The protein localises to the cytoplasm. It is found in the secreted. It localises to the cell surface. It carries out the reaction (2R)-2-phosphoglycerate = phosphoenolpyruvate + H2O. The protein operates within carbohydrate degradation; glycolysis; pyruvate from D-glyceraldehyde 3-phosphate: step 4/5. In terms of biological role, catalyzes the reversible conversion of 2-phosphoglycerate (2-PG) into phosphoenolpyruvate (PEP). It is essential for the degradation of carbohydrates via glycolysis. This is Enolase from Shigella sonnei (strain Ss046).